Consider the following 281-residue polypeptide: Putative pyruvate, phosphate dikinase regulatory protein (281 aa).

153–160 (GISRTSKT) serves as a coordination point for ADP.

The protein belongs to the pyruvate, phosphate/water dikinase regulatory protein family. PDRP subfamily.

It catalyses the reaction N(tele)-phospho-L-histidyl/L-threonyl-[pyruvate, phosphate dikinase] + ADP = N(tele)-phospho-L-histidyl/O-phospho-L-threonyl-[pyruvate, phosphate dikinase] + AMP + H(+). The enzyme catalyses N(tele)-phospho-L-histidyl/O-phospho-L-threonyl-[pyruvate, phosphate dikinase] + phosphate + H(+) = N(tele)-phospho-L-histidyl/L-threonyl-[pyruvate, phosphate dikinase] + diphosphate. Its function is as follows. Bifunctional serine/threonine kinase and phosphorylase involved in the regulation of the pyruvate, phosphate dikinase (PPDK) by catalyzing its phosphorylation/dephosphorylation. This is Putative pyruvate, phosphate dikinase regulatory protein from Bdellovibrio bacteriovorus (strain ATCC 15356 / DSM 50701 / NCIMB 9529 / HD100).